The following is a 120-amino-acid chain: Large ribosomal subunit protein uL18 (120 aa).

The protein belongs to the universal ribosomal protein uL18 family. In terms of assembly, part of the 50S ribosomal subunit; part of the 5S rRNA/L5/L18/L25 subcomplex. Contacts the 5S and 23S rRNAs.

This is one of the proteins that bind and probably mediate the attachment of the 5S RNA into the large ribosomal subunit, where it forms part of the central protuberance. The protein is Large ribosomal subunit protein uL18 of Rippkaea orientalis (strain PCC 8801 / RF-1) (Cyanothece sp. (strain PCC 8801)).